The following is an 801-amino-acid chain: Lon protease 2 (801 aa).

The Lon N-terminal domain occupies 14 to 209 (LPMLPVRDIV…LVNEILAAEL (196 aa)). 361 to 368 (GPPGVGKT) provides a ligand contact to ATP. One can recognise a Lon proteolytic domain in the interval 597–778 (DSQVGVVQGL…DEVFAVAFDK (182 aa)). Catalysis depends on residues serine 684 and lysine 727. Positions 780–791 (AKGQEKKPAAKK) are enriched in basic and acidic residues. Residues 780–801 (AKGQEKKPAAKKDPKKTKSLAA) form a disordered region. Residues 792–801 (DPKKTKSLAA) show a composition bias toward basic residues.

This sequence belongs to the peptidase S16 family. Homohexamer. Organized in a ring with a central cavity.

It is found in the cytoplasm. It carries out the reaction Hydrolysis of proteins in presence of ATP.. In terms of biological role, ATP-dependent serine protease that mediates the selective degradation of mutant and abnormal proteins as well as certain short-lived regulatory proteins. Required for cellular homeostasis and for survival from DNA damage and developmental changes induced by stress. Degrades polypeptides processively to yield small peptide fragments that are 5 to 10 amino acids long. Binds to DNA in a double-stranded, site-specific manner. The sequence is that of Lon protease 2 from Bdellovibrio bacteriovorus (strain ATCC 15356 / DSM 50701 / NCIMB 9529 / HD100).